The chain runs to 129 residues: Small ribosomal subunit protein uS11 (129 aa).

The protein belongs to the universal ribosomal protein uS11 family. Part of the 30S ribosomal subunit. Interacts with proteins S7 and S18. Binds to IF-3.

Its function is as follows. Located on the platform of the 30S subunit, it bridges several disparate RNA helices of the 16S rRNA. Forms part of the Shine-Dalgarno cleft in the 70S ribosome. In Mannheimia succiniciproducens (strain KCTC 0769BP / MBEL55E), this protein is Small ribosomal subunit protein uS11.